The following is a 345-amino-acid chain: Phosphoribosylformylglycinamidine cyclo-ligase (345 aa).

Belongs to the AIR synthase family.

It localises to the cytoplasm. The enzyme catalyses 2-formamido-N(1)-(5-O-phospho-beta-D-ribosyl)acetamidine + ATP = 5-amino-1-(5-phospho-beta-D-ribosyl)imidazole + ADP + phosphate + H(+). Its pathway is purine metabolism; IMP biosynthesis via de novo pathway; 5-amino-1-(5-phospho-D-ribosyl)imidazole from N(2)-formyl-N(1)-(5-phospho-D-ribosyl)glycinamide: step 2/2. In Escherichia coli O6:K15:H31 (strain 536 / UPEC), this protein is Phosphoribosylformylglycinamidine cyclo-ligase.